The primary structure comprises 82 residues: Cell division topological specificity factor (82 aa).

This sequence belongs to the MinE family.

In terms of biological role, prevents the cell division inhibition by proteins MinC and MinD at internal division sites while permitting inhibition at polar sites. This ensures cell division at the proper site by restricting the formation of a division septum at the midpoint of the long axis of the cell. This chain is Cell division topological specificity factor, found in Hahella chejuensis (strain KCTC 2396).